A 121-amino-acid chain; its full sequence is UPF0102 protein BT_2236 (121 aa).

The protein belongs to the UPF0102 family.

This is UPF0102 protein BT_2236 from Bacteroides thetaiotaomicron (strain ATCC 29148 / DSM 2079 / JCM 5827 / CCUG 10774 / NCTC 10582 / VPI-5482 / E50).